We begin with the raw amino-acid sequence, 146 residues long: 3-dehydroquinate dehydratase (146 aa).

Catalysis depends on Y22, which acts as the Proton acceptor. The substrate site is built by N73, H79, and D86. Catalysis depends on H99, which acts as the Proton donor. Residues 100–101 (VS) and R110 each bind substrate.

It belongs to the type-II 3-dehydroquinase family. As to quaternary structure, homododecamer.

The catalysed reaction is 3-dehydroquinate = 3-dehydroshikimate + H2O. It functions in the pathway metabolic intermediate biosynthesis; chorismate biosynthesis; chorismate from D-erythrose 4-phosphate and phosphoenolpyruvate: step 3/7. In terms of biological role, catalyzes a trans-dehydration via an enolate intermediate. In Kineococcus radiotolerans (strain ATCC BAA-149 / DSM 14245 / SRS30216), this protein is 3-dehydroquinate dehydratase.